Reading from the N-terminus, the 456-residue chain is Bifunctional protein GlmU (456 aa).

A pyrophosphorylase region spans residues methionine 1–arginine 228. UDP-N-acetyl-alpha-D-glucosamine contacts are provided by residues leucine 8 to glycine 11, lysine 22, glutamine 72, glycine 77 to threonine 78, tyrosine 99 to aspartate 101, glycine 138, glutamate 153, asparagine 168, and asparagine 226. Residue aspartate 101 participates in Mg(2+) binding. A Mg(2+)-binding site is contributed by asparagine 226. The tract at residues glutamate 229–alanine 249 is linker. The segment at glycine 250–lysine 456 is N-acetyltransferase. UDP-N-acetyl-alpha-D-glucosamine is bound by residues arginine 331 and lysine 349. Histidine 361 (proton acceptor) is an active-site residue. Positions 364 and 375 each coordinate UDP-N-acetyl-alpha-D-glucosamine. Acetyl-CoA-binding positions include asparagine 384 to tyrosine 385, serine 403, serine 421, and arginine 438.

In the N-terminal section; belongs to the N-acetylglucosamine-1-phosphate uridyltransferase family. This sequence in the C-terminal section; belongs to the transferase hexapeptide repeat family. In terms of assembly, homotrimer. It depends on Mg(2+) as a cofactor.

It localises to the cytoplasm. The catalysed reaction is alpha-D-glucosamine 1-phosphate + acetyl-CoA = N-acetyl-alpha-D-glucosamine 1-phosphate + CoA + H(+). It carries out the reaction N-acetyl-alpha-D-glucosamine 1-phosphate + UTP + H(+) = UDP-N-acetyl-alpha-D-glucosamine + diphosphate. It participates in nucleotide-sugar biosynthesis; UDP-N-acetyl-alpha-D-glucosamine biosynthesis; N-acetyl-alpha-D-glucosamine 1-phosphate from alpha-D-glucosamine 6-phosphate (route II): step 2/2. It functions in the pathway nucleotide-sugar biosynthesis; UDP-N-acetyl-alpha-D-glucosamine biosynthesis; UDP-N-acetyl-alpha-D-glucosamine from N-acetyl-alpha-D-glucosamine 1-phosphate: step 1/1. The protein operates within bacterial outer membrane biogenesis; LPS lipid A biosynthesis. In terms of biological role, catalyzes the last two sequential reactions in the de novo biosynthetic pathway for UDP-N-acetylglucosamine (UDP-GlcNAc). The C-terminal domain catalyzes the transfer of acetyl group from acetyl coenzyme A to glucosamine-1-phosphate (GlcN-1-P) to produce N-acetylglucosamine-1-phosphate (GlcNAc-1-P), which is converted into UDP-GlcNAc by the transfer of uridine 5-monophosphate (from uridine 5-triphosphate), a reaction catalyzed by the N-terminal domain. The protein is Bifunctional protein GlmU of Alkaliphilus metalliredigens (strain QYMF).